The following is a 376-amino-acid chain: Mannosyl phosphorylinositol ceramide synthase CSH1 (376 aa).

2 helical membrane passes run 7–27 (ILII…FDLL) and 274–294 (ILSC…GEFT). The segment at 331–351 (NKEKRRNPTRHEYNSRGKRLR) is disordered. Serine 354 is modified (phosphoserine).

Belongs to the glycosyltransferase 32 family. Heterodimer of CSH1 and CSG2.

The protein resides in the vacuole membrane. The enzyme catalyses a 1D-myo-inositol-1-phospho-N-[(R)-2-hydroxy-very-long-chain fatty acyl]-(R)-4-hydroxysphingoid base + GDP-alpha-D-mannose = an alpha-D-mannosyl-(1&lt;-&gt;6)-1D-myo-inositol-1-phospho-N-[(R)-2-hydroxy-very-long-chain fatty acyl]-(R)-4-hydroxysphingoid base + GDP + H(+). Its function is as follows. Involved in the synthesis of mannosyl phosphorylinositol ceramide. Catalyzes the addition of mannosyl to phosphorylinositol ceramide. The protein is Mannosyl phosphorylinositol ceramide synthase CSH1 of Saccharomyces cerevisiae (strain ATCC 204508 / S288c) (Baker's yeast).